The chain runs to 465 residues: MIVTRFAPSPTGNLHIGGLRTALFSYLYARKTGGKFLLRIEDTDLARNSHDATKAIIEAFDWVGLSYDGEAIYQSERFPLYKEYIDRLIQEGKAYYCYMSKEELDALREEQRSRGETPRYDNRYRDFTGTPPSGVAPVVRIKAPLEGYIEFEDGVKGEMKIGAKEMDDYIIARSDGTPTYNFVVSIDDALMGVTDVIRGDDHLTNTPKQIIVYQALGFPIPKFYHVPMILNPEGRKLSKRDGAMGVMDYKRAGYLPEAVLNFLVRLGWSHGDQEIFSMEEMLRFFDPKDLNSSASAYNQEKFLWLNHHYITQTPNERLEELLLEFGCQPLSLGVREILYPALKERAKTLAELAQMLQEIVQTPSELDTKMLEKVGNSENGEILENYALFLESLESAGENPKILEEETQAFLDIHGLKSGKLFQSVRLALLGKGGGPGIFEIMAAIGKEESMARIQKASEIFKNRN.

Positions 8-18 (PSPTGNLHIGG) match the 'HIGH' region motif. The short motif at 236–240 (KLSKR) is the 'KMSKS' region element. Residue Lys239 participates in ATP binding.

It belongs to the class-I aminoacyl-tRNA synthetase family. Glutamate--tRNA ligase type 1 subfamily. As to quaternary structure, monomer.

The protein resides in the cytoplasm. The enzyme catalyses tRNA(Glu) + L-glutamate + ATP = L-glutamyl-tRNA(Glu) + AMP + diphosphate. In terms of biological role, catalyzes the attachment of glutamate to tRNA(Glu) in a two-step reaction: glutamate is first activated by ATP to form Glu-AMP and then transferred to the acceptor end of tRNA(Glu). This Wolinella succinogenes (strain ATCC 29543 / DSM 1740 / CCUG 13145 / JCM 31913 / LMG 7466 / NCTC 11488 / FDC 602W) (Vibrio succinogenes) protein is Glutamate--tRNA ligase 1.